The primary structure comprises 32 residues: uncharacterized protein (32 aa).

This is an uncharacterized protein from Haemophilus influenzae (strain ATCC 51907 / DSM 11121 / KW20 / Rd).